A 314-amino-acid chain; its full sequence is tRNA selenocysteine 1-associated protein 1 (314 aa).

RRM domains are found at residues 2–85 (NSLW…RSNY) and 94–173 (FSLF…LASS).

It belongs to the RRM TRSPAP family.

It localises to the nucleus. Its subcellular location is the cytoplasm. Its function is as follows. Involved in the early steps of selenocysteine biosynthesis and tRNA(Sec) charging to the later steps resulting in the cotranslational incorporation of selenocysteine into selenoproteins. This Danio rerio (Zebrafish) protein is tRNA selenocysteine 1-associated protein 1.